Reading from the N-terminus, the 123-residue chain is Large ribosomal subunit protein uL14c (123 aa).

This sequence belongs to the universal ribosomal protein uL14 family. Part of the 50S ribosomal subunit.

The protein localises to the plastid. It localises to the chloroplast. Its function is as follows. Binds to 23S rRNA. The chain is Large ribosomal subunit protein uL14c from Sorghum bicolor (Sorghum).